Reading from the N-terminus, the 95-residue chain is Ragulator complex protein LAMTOR4 homolog (95 aa).

Belongs to the LAMTOR4 family. As to quaternary structure, part of the Ragulator complex.

The protein resides in the lysosome. Functionally, regulator of the TOR pathway, a signaling cascade that promotes cell growth in response to growth factors, energy levels, and amino acids. As part of the Ragulator complex, may activate the TOR signaling cascade in response to amino acids. The sequence is that of Ragulator complex protein LAMTOR4 homolog from Nematostella vectensis (Starlet sea anemone).